We begin with the raw amino-acid sequence, 223 residues long: Ribosomal RNA small subunit methyltransferase G (223 aa).

S-adenosyl-L-methionine contacts are provided by G85, F90, and R154.

This sequence belongs to the methyltransferase superfamily. RNA methyltransferase RsmG family.

It localises to the cytoplasm. The catalysed reaction is guanosine(527) in 16S rRNA + S-adenosyl-L-methionine = N(7)-methylguanosine(527) in 16S rRNA + S-adenosyl-L-homocysteine. Specifically methylates the N7 position of guanine in position 527 of 16S rRNA. In Rhodopseudomonas palustris (strain TIE-1), this protein is Ribosomal RNA small subunit methyltransferase G.